A 332-amino-acid chain; its full sequence is Glycerol-3-phosphate dehydrogenase [NAD(P)+] (332 aa).

NADPH-binding residues include Trp13, Lys34, and Lys108. Sn-glycerol 3-phosphate is bound by residues Lys108, Gly136, and Ser138. Ala140 contributes to the NADPH binding site. Residues Lys191, Asp244, Ser254, Arg255, and Asn256 each contribute to the sn-glycerol 3-phosphate site. Catalysis depends on Lys191, which acts as the Proton acceptor. An NADPH-binding site is contributed by Arg255. 2 residues coordinate NADPH: Val279 and Glu281.

The protein belongs to the NAD-dependent glycerol-3-phosphate dehydrogenase family.

The protein localises to the cytoplasm. The catalysed reaction is sn-glycerol 3-phosphate + NAD(+) = dihydroxyacetone phosphate + NADH + H(+). It catalyses the reaction sn-glycerol 3-phosphate + NADP(+) = dihydroxyacetone phosphate + NADPH + H(+). It functions in the pathway membrane lipid metabolism; glycerophospholipid metabolism. Catalyzes the reduction of the glycolytic intermediate dihydroxyacetone phosphate (DHAP) to sn-glycerol 3-phosphate (G3P), the key precursor for phospholipid synthesis. The polypeptide is Glycerol-3-phosphate dehydrogenase [NAD(P)+] (Francisella tularensis subsp. novicida (strain U112)).